Reading from the N-terminus, the 1069-residue chain is Thyrotropin-releasing hormone-degrading ectoenzyme (1069 aa).

Acidic residues predominate over residues 1 to 11 (MALDGELGEQE). The segment at 1–46 (MALDGELGEQEEEKKKKKKKKRKKKKEEEEEEEGAEKSSSPFAAAM) is disordered. Topologically, residues 1-85 (MALDGELGEQ…ERHIAVHKRL (85 aa)) are cytoplasmic. Over residues 15-25 (KKKKKKKRKKK) the composition is skewed to basic residues. The helical; Signal-anchor for type II membrane protein transmembrane segment at 86–106 (VLAFAVSLVALLAVTMLAVLL) threads the bilayer. The Extracellular segment spans residues 107–1069 (SLRFDECGAS…FQWLGKALRH (963 aa)). The disordered stretch occupies residues 117-179 (ATPGADGGPS…PSEEEREPWE (63 aa)). Gly residues predominate over residues 121-136 (ADGGPSGFPERGGNGS). N-linked (GlcNAc...) asparagine glycosylation is found at asparagine 134, asparagine 205, asparagine 220, asparagine 267, and asparagine 383. 449-453 (AAMEN) contacts substrate. Position 485 (histidine 485) interacts with Zn(2+). Residue glutamate 486 is the Proton acceptor of the active site. Residues histidine 489 and glutamate 508 each coordinate Zn(2+). N-linked (GlcNAc...) asparagine glycosylation is found at asparagine 650, asparagine 679, asparagine 694, asparagine 708, asparagine 729, asparagine 845, and asparagine 951.

The protein belongs to the peptidase M1 family. In terms of assembly, homodimer; disulfide-linked. Zn(2+) is required as a cofactor. As to expression, predominantly expressed in brain.

The protein resides in the membrane. It catalyses the reaction Release of the N-terminal pyroglutamyl group from pGlu-|-His-Xaa tripeptides and pGlu-|-His-Xaa-Gly tetrapeptides.. Functionally, specific inactivation of TRH after its release. This is Thyrotropin-releasing hormone-degrading ectoenzyme (TRHDE) from Homo sapiens (Human).